A 270-amino-acid chain; its full sequence is PspA protein (270 aa).

Residues Met-238–Gln-270 are disordered. The segment covering Gly-240–Thr-258 has biased composition (low complexity).

This sequence belongs to the PspA/Vipp/IM30 family.

Its subcellular location is the cytoplasm. Involved in resistance to stress. Associates with and regulates lipid droplets (LDs) homeostasis under conditions of stress and may regulate non-replicating persistence (NRP). Could be involved in preservation of envelope integrity and tolerance to surface stress. The chain is PspA protein from Mycobacterium tuberculosis (strain ATCC 25177 / H37Ra).